We begin with the raw amino-acid sequence, 147 residues long: Glucosamine 6-phosphate N-acetyltransferase (147 aa).

The 141-residue stretch at 7 to 147 folds into the N-acetyltransferase domain; it reads LELRVLEESD…AHERQMRLDL (141 aa). Residues Thr-28 and 86 to 88 each bind D-glucosamine 6-phosphate; that span reads EDV. Residues 88–90 and 96–101 each bind acetyl-CoA; these read VVV and GAGLGK. Residues 117 to 118 and Asp-122 each bind D-glucosamine 6-phosphate; that span reads YK. 131–133 serves as a coordination point for acetyl-CoA; sequence YEK.

Belongs to the acetyltransferase family. GNA1 subfamily. In terms of assembly, homodimer. Post-translationally, contains poly-N-acetyllactosamines.

The protein resides in the glycosome. The enzyme catalyses D-glucosamine 6-phosphate + acetyl-CoA = N-acetyl-D-glucosamine 6-phosphate + CoA + H(+). It functions in the pathway nucleotide-sugar biosynthesis; UDP-N-acetyl-alpha-D-glucosamine biosynthesis; N-acetyl-alpha-D-glucosamine 1-phosphate from alpha-D-glucosamine 6-phosphate (route I): step 1/2. Functionally, involved in the biosynthesis of UDP-N-acetyl-alpha-D-glucosamine. Catalyzes the formation of N-acetyl-D-glucosamine 6-phosphate from acetyl-coenzyme A (acetyl-CoA) and D-glucosamine 6-phosphate. In Trypanosoma brucei brucei, this protein is Glucosamine 6-phosphate N-acetyltransferase.